The sequence spans 284 residues: L-ribulose-5-phosphate 3-epimerase UlaE (284 aa).

The protein belongs to the L-ribulose-5-phosphate 3-epimerase family.

It catalyses the reaction L-ribulose 5-phosphate = L-xylulose 5-phosphate. Its pathway is cofactor degradation; L-ascorbate degradation; D-xylulose 5-phosphate from L-ascorbate: step 3/4. Catalyzes the isomerization of L-xylulose-5-phosphate to L-ribulose-5-phosphate. Is involved in the anaerobic L-ascorbate utilization. The sequence is that of L-ribulose-5-phosphate 3-epimerase UlaE from Shigella flexneri serotype 5b (strain 8401).